The following is a 443-amino-acid chain: Ribosomal protein uS12 methylthiotransferase RimO (443 aa).

The MTTase N-terminal domain maps to 10–120; it reads PRVGFVSLGC…VMAAVHAQCP (111 aa). Residues C19, C55, C84, C152, C156, and C159 each coordinate [4Fe-4S] cluster. The region spanning 138–375 is the Radical SAM core domain; it reads LTPRHYAYLK…MALQAEISAR (238 aa). In terms of domain architecture, TRAM spans 378–443; the sequence is ARRVGTECTV…DEHDLYGRVL (66 aa).

Belongs to the methylthiotransferase family. RimO subfamily. [4Fe-4S] cluster is required as a cofactor.

The protein localises to the cytoplasm. The enzyme catalyses L-aspartate(89)-[ribosomal protein uS12]-hydrogen + (sulfur carrier)-SH + AH2 + 2 S-adenosyl-L-methionine = 3-methylsulfanyl-L-aspartate(89)-[ribosomal protein uS12]-hydrogen + (sulfur carrier)-H + 5'-deoxyadenosine + L-methionine + A + S-adenosyl-L-homocysteine + 2 H(+). Its function is as follows. Catalyzes the methylthiolation of an aspartic acid residue of ribosomal protein uS12. This Alkalilimnicola ehrlichii (strain ATCC BAA-1101 / DSM 17681 / MLHE-1) protein is Ribosomal protein uS12 methylthiotransferase RimO.